The primary structure comprises 100 residues: Urease subunit gamma (100 aa).

The protein belongs to the urease gamma subunit family. As to quaternary structure, heterotrimer of UreA (gamma), UreB (beta) and UreC (alpha) subunits. Three heterotrimers associate to form the active enzyme.

The protein resides in the cytoplasm. It catalyses the reaction urea + 2 H2O + H(+) = hydrogencarbonate + 2 NH4(+). It participates in nitrogen metabolism; urea degradation; CO(2) and NH(3) from urea (urease route): step 1/1. This is Urease subunit gamma from Streptomyces griseus subsp. griseus (strain JCM 4626 / CBS 651.72 / NBRC 13350 / KCC S-0626 / ISP 5235).